The sequence spans 548 residues: ATP synthase subunit alpha (548 aa).

172 to 179 (GDRKTGKT) contributes to the ATP binding site. Residues 511–548 (FETTSGESVVPDENVEAMSEDDVEKESVKVRKPAPKKK) form a disordered region. Positions 523 to 534 (ENVEAMSEDDVE) are enriched in acidic residues.

The protein belongs to the ATPase alpha/beta chains family. In terms of assembly, F-type ATPases have 2 components, CF(1) - the catalytic core - and CF(0) - the membrane proton channel. CF(1) has five subunits: alpha(3), beta(3), gamma(1), delta(1), epsilon(1). CF(0) has three main subunits: a(1), b(2) and c(9-12). The alpha and beta chains form an alternating ring which encloses part of the gamma chain. CF(1) is attached to CF(0) by a central stalk formed by the gamma and epsilon chains, while a peripheral stalk is formed by the delta and b chains.

The protein resides in the cell membrane. The catalysed reaction is ATP + H2O + 4 H(+)(in) = ADP + phosphate + 5 H(+)(out). In terms of biological role, produces ATP from ADP in the presence of a proton gradient across the membrane. The alpha chain is a regulatory subunit. The protein is ATP synthase subunit alpha of Mycobacterium sp. (strain JLS).